Reading from the N-terminus, the 328-residue chain is UPF0285 protein MJ1370 (328 aa).

The protein belongs to the UPF0285 family.

In Methanocaldococcus jannaschii (strain ATCC 43067 / DSM 2661 / JAL-1 / JCM 10045 / NBRC 100440) (Methanococcus jannaschii), this protein is UPF0285 protein MJ1370.